Reading from the N-terminus, the 126-residue chain is MHAIMLKAKLHRAEVTHSVLDYEGSCAIDGEWLDLAGIHEYEQIQIYNVDNGERFTTYAIRAEDGSKMISVNGAAAHKAQKGDRVIICAYAHYSEAELATHKPRMLYMAPGNVLSHTSNAIPVQVA.

Ser-25 acts as the Schiff-base intermediate with substrate; via pyruvic acid in catalysis. At Ser-25 the chain carries Pyruvic acid (Ser). Thr-57 lines the substrate pocket. The active-site Proton donor is the Tyr-58. 73–75 (GAA) serves as a coordination point for substrate.

This sequence belongs to the PanD family. In terms of assembly, heterooctamer of four alpha and four beta subunits. The cofactor is pyruvate. Is synthesized initially as an inactive proenzyme, which is activated by self-cleavage at a specific serine bond to produce a beta-subunit with a hydroxyl group at its C-terminus and an alpha-subunit with a pyruvoyl group at its N-terminus.

The protein localises to the cytoplasm. It catalyses the reaction L-aspartate + H(+) = beta-alanine + CO2. Its pathway is cofactor biosynthesis; (R)-pantothenate biosynthesis; beta-alanine from L-aspartate: step 1/1. Functionally, catalyzes the pyruvoyl-dependent decarboxylation of aspartate to produce beta-alanine. The polypeptide is Aspartate 1-decarboxylase (Azotobacter vinelandii (strain DJ / ATCC BAA-1303)).